A 274-amino-acid chain; its full sequence is Nitrogenase iron protein (274 aa).

8–15 (GKGGIGKS) is an ATP binding site. C94 contributes to the [4Fe-4S] cluster binding site. R97 bears the ADP-ribosylarginine; by dinitrogenase reductase ADP-ribosyltransferase mark. C131 contributes to the [4Fe-4S] cluster binding site.

It belongs to the NifH/BchL/ChlL family. Homodimer. The cofactor is [4Fe-4S] cluster. In terms of processing, the reversible ADP-ribosylation of Arg-97 inactivates the nitrogenase reductase and regulates nitrogenase activity.

The catalysed reaction is N2 + 8 reduced [2Fe-2S]-[ferredoxin] + 16 ATP + 16 H2O = H2 + 8 oxidized [2Fe-2S]-[ferredoxin] + 2 NH4(+) + 16 ADP + 16 phosphate + 6 H(+). In terms of biological role, the key enzymatic reactions in nitrogen fixation are catalyzed by the nitrogenase complex, which has 2 components: the iron protein and the molybdenum-iron protein. This Chlorobium luteolum (strain DSM 273 / BCRC 81028 / 2530) (Pelodictyon luteolum) protein is Nitrogenase iron protein.